Consider the following 319-residue polypeptide: MQFSLIPFISSFALTVIFLPLFIGFMRMKHEGQVIRDEGPKWHEKKSGTPTMGGVVFMLASVISTLWVLIWQKNLNKTTWILIIAFLGYGIIGFLDDGIKLYFKRNLGLKAWQKLLGQIIIAALIIALAFSDHFAFELYIPFAGMVRNSFLFSLFVLFWLVGFSNAVNLSDGLDGLATGLSIIAYATYAWIAYQEKNWVIVAFTLSVIGGLVGFFIFNHKPAKIFMGDAGSLALGGGLATVSIFLHRPWSLLLIGIVFVLETLSVILQVISFQTTGKRIFKMTPIHHHFEMLGWSEWKVDIVFWIVGLIGSIIYLIIWG.

Helical transmembrane passes span 5–25 (LIPF…FIGF), 51–71 (TMGG…VLIW), 79–99 (TWIL…DDGI), 116–136 (LGQI…HFAF), 149–169 (SFLF…AVNL), 172–192 (GLDG…AWIA), 197–217 (NWVI…FFIF), 224–244 (IFMG…VSIF), 252–272 (LLIG…VISF), and 299–319 (VDIV…IIWG).

It belongs to the glycosyltransferase 4 family. MraY subfamily. It depends on Mg(2+) as a cofactor.

The protein resides in the cell membrane. It catalyses the reaction UDP-N-acetyl-alpha-D-muramoyl-L-alanyl-gamma-D-glutamyl-L-lysyl-D-alanyl-D-alanine + di-trans,octa-cis-undecaprenyl phosphate = Mur2Ac(oyl-L-Ala-gamma-D-Glu-L-Lys-D-Ala-D-Ala)-di-trans,octa-cis-undecaprenyl diphosphate + UMP. The protein operates within cell wall biogenesis; peptidoglycan biosynthesis. Functionally, catalyzes the initial step of the lipid cycle reactions in the biosynthesis of the cell wall peptidoglycan: transfers peptidoglycan precursor phospho-MurNAc-pentapeptide from UDP-MurNAc-pentapeptide onto the lipid carrier undecaprenyl phosphate, yielding undecaprenyl-pyrophosphoryl-MurNAc-pentapeptide, known as lipid I. This is Phospho-N-acetylmuramoyl-pentapeptide-transferase from Lactobacillus gasseri (strain ATCC 33323 / DSM 20243 / BCRC 14619 / CIP 102991 / JCM 1131 / KCTC 3163 / NCIMB 11718 / NCTC 13722 / AM63).